We begin with the raw amino-acid sequence, 97 residues long: MPSSNGPRQATRNKLKNDARERGTSPPQRSIEEYDDGEKVHLKLDPSVPNGQFHPRFNGRTGTVVGEQGDAFKVEIEDGNVTKTVIAAPAHLRRQQA.

Over residues 1–12 (MPSSNGPRQATR) the composition is skewed to polar residues. The tract at residues 1 to 35 (MPSSNGPRQATRNKLKNDARERGTSPPQRSIEEYD) is disordered.

The protein belongs to the eukaryotic ribosomal protein eL21 family.

This is Large ribosomal subunit protein eL21 from Natronomonas pharaonis (strain ATCC 35678 / DSM 2160 / CIP 103997 / JCM 8858 / NBRC 14720 / NCIMB 2260 / Gabara) (Halobacterium pharaonis).